The sequence spans 338 residues: Cytoskeleton protein RodZ (338 aa).

The Cytoplasmic segment spans residues 1–111 (MNTEATHEEN…LGKSRKKRDG (111 aa)). The HTH cro/C1-type domain maps to 19–71 (LRLAREQLGLSQQVVAERLCLKVSTVRDIEEDKAPADLASTFLRGYIRSYARL). A DNA-binding region (H-T-H motif) is located at residues 30 to 49 (QQVVAERLCLKVSTVRDIEE). The chain crosses the membrane as a helical; Signal-anchor for type II membrane protein span at residues 112–132 (WLMSFTWLVLFVVVGLTGAWW). Over 133-338 (WQNHKAQQEE…TLNAEQSVTQ (206 aa)) the chain is Periplasmic. Composition is skewed to polar residues over residues 147–180 (ADQS…QDQA) and 189–214 (GDTQ…SQQP). Residues 147-245 (ADQSSAELSQ…AQSQLPVGQA (99 aa)) form a disordered region. The span at 220-239 (SQANTDTAAQQNTTQPAQSQ) shows a compositional bias: low complexity.

It belongs to the RodZ family.

It localises to the cell inner membrane. In terms of biological role, cytoskeletal protein that is involved in cell-shape control through regulation of the length of the long axis. The chain is Cytoskeleton protein RodZ from Cronobacter sakazakii (strain ATCC BAA-894) (Enterobacter sakazakii).